Consider the following 840-residue polypeptide: Probable sulfate permease C869.05c (840 aa).

Helical transmembrane passes span 120 to 140 (WLIN…PQGM), 148 to 168 (LPSE…CFFA), 173 to 193 (VSIG…ANVM), 208 to 228 (LALL…GFII), 230 to 250 (FIPV…ILSG), 278 to 298 (LPDT…LFFT), 315 to 335 (AFFL…TAIS), 410 to 430 (LIAM…PATG), 447 to 467 (IAGI…TDAF), 470 to 490 (IPNA…ILPM), 505 to 525 (CIFF…GIYV), and 527 to 547 (VCLA…SFLG). An STAS domain is found at 578–733 (NLEIQSPPPG…CVEVAAPLRD (156 aa)). The residue at position 823 (S823) is a Phosphoserine.

It belongs to the SLC26A/SulP transporter (TC 2.A.53) family.

It localises to the membrane. High affinity uptake of sulfate into the cell. The polypeptide is Probable sulfate permease C869.05c (Schizosaccharomyces pombe (strain 972 / ATCC 24843) (Fission yeast)).